Reading from the N-terminus, the 186-residue chain is ADP-ribosylation factor-like protein 8A (186 aa).

Residues 1–19 constitute an intramembrane region (note=Mediates targeting to membranes); sequence MLALFNKLLDWFKALFWKE. Residues 29–35, 71–75, and 130–133 each bind GTP; these read QYSGKTT, DIGGQ, and NKRD.

Belongs to the small GTPase superfamily. Arf family.

The protein resides in the late endosome membrane. It is found in the lysosome membrane. Functionally, may play a role in lysosomes motility. Alternatively, may play a role in chromosome segregation. This is ADP-ribosylation factor-like protein 8A (arl8a) from Xenopus tropicalis (Western clawed frog).